Reading from the N-terminus, the 732-residue chain is Polyadenylate-binding protein, cytoplasmic and nuclear (732 aa).

Polar residues predominate over residues 1 to 19 (MSAETSTTPAPAENTNGTP). The disordered stretch occupies residues 1–26 (MSAETSTTPAPAENTNGTPDNAPAPE). RRM domains lie at 42-120 (ASLY…WSQR), 130-207 (GNVF…HHIS), 223-300 (TNIY…RAQK), and 326-454 (VNLY…LAQR). 2 disordered regions span residues 357-413 (VMRD…KKPL) and 706-732 (MKNK…ENKA). Over residues 371–412 (SETKESANKENEKAAEGEKEPAAEEKEKEEKKEAEQKPEKKP) the composition is skewed to basic and acidic residues. A PABC domain is found at 630–707 (VGVLTAQALS…ALSVYDEYMK (78 aa)).

The protein belongs to the polyadenylate-binding protein type-1 family.

Its subcellular location is the cytoplasm. The protein resides in the nucleus. Binds the poly(A) tail of mRNA. Appears to be an important mediator of the multiple roles of the poly(A) tail in mRNA biogenesis, stability and translation. In the nucleus, involved in both mRNA cleavage and polyadenylation. Is also required for efficient mRNA export to the cytoplasm. Acts in concert with a poly(A)-specific nuclease (PAN) to affect poly(A) tail shortening, which may occur concomitantly with either nucleocytoplasmic mRNA transport or translational initiation. In the cytoplasm, stimulates translation initiation and regulates mRNA decay through translation termination-coupled poly(A) shortening, probably mediated by PAN. This chain is Polyadenylate-binding protein, cytoplasmic and nuclear (pab1), found in Emericella nidulans (strain FGSC A4 / ATCC 38163 / CBS 112.46 / NRRL 194 / M139) (Aspergillus nidulans).